A 387-amino-acid chain; its full sequence is Exodeoxyribonuclease 7 large subunit (387 aa).

The protein belongs to the XseA family. In terms of assembly, heterooligomer composed of large and small subunits.

The protein resides in the cytoplasm. It carries out the reaction Exonucleolytic cleavage in either 5'- to 3'- or 3'- to 5'-direction to yield nucleoside 5'-phosphates.. In terms of biological role, bidirectionally degrades single-stranded DNA into large acid-insoluble oligonucleotides, which are then degraded further into small acid-soluble oligonucleotides. The sequence is that of Exodeoxyribonuclease 7 large subunit from Campylobacter jejuni subsp. jejuni serotype O:23/36 (strain 81-176).